Reading from the N-terminus, the 76-residue chain is Conotoxin Vc6.9 (76 aa).

Residues 1 to 19 form the signal peptide; the sequence is MEKLTILLLVAAVLMSTQA. Residues 20–41 constitute a propeptide that is removed on maturation; it reads LMQEQRQKAKINLFSKRKPSAE. 3 disulfides stabilise this stretch: C49–C63, C56–C67, and C62–C72.

It belongs to the conotoxin O2 superfamily. As to expression, expressed by the venom duct.

It localises to the secreted. Inhibits voltage-gated ion channels. The polypeptide is Conotoxin Vc6.9 (Conus victoriae (Queen Victoria cone)).